Consider the following 363-residue polypeptide: Aminomethyltransferase (363 aa).

The protein belongs to the GcvT family. As to quaternary structure, the glycine cleavage system is composed of four proteins: P, T, L and H.

It catalyses the reaction N(6)-[(R)-S(8)-aminomethyldihydrolipoyl]-L-lysyl-[protein] + (6S)-5,6,7,8-tetrahydrofolate = N(6)-[(R)-dihydrolipoyl]-L-lysyl-[protein] + (6R)-5,10-methylene-5,6,7,8-tetrahydrofolate + NH4(+). In terms of biological role, the glycine cleavage system catalyzes the degradation of glycine. In Prosthecochloris aestuarii (strain DSM 271 / SK 413), this protein is Aminomethyltransferase.